Reading from the N-terminus, the 486-residue chain is Cysteine--tRNA ligase (486 aa).

Cys27 provides a ligand contact to Zn(2+). The 'HIGH' region motif lies at 29-39 (PTTYNFIHLGN). Zn(2+) contacts are provided by Cys207, His232, and Glu236. The short motif at 264–268 (KMSKS) is the 'KMSKS' region element. Lys267 serves as a coordination point for ATP.

It belongs to the class-I aminoacyl-tRNA synthetase family. As to quaternary structure, monomer. The cofactor is Zn(2+).

Its subcellular location is the cytoplasm. It catalyses the reaction tRNA(Cys) + L-cysteine + ATP = L-cysteinyl-tRNA(Cys) + AMP + diphosphate. This chain is Cysteine--tRNA ligase, found in Desulforamulus reducens (strain ATCC BAA-1160 / DSM 100696 / MI-1) (Desulfotomaculum reducens).